The sequence spans 354 residues: NADH-quinone oxidoreductase subunit H (354 aa).

A run of 8 helical transmembrane segments spans residues 23–43 (LVRA…LILW), 91–111 (YIIA…VVPF), 124–144 (LLYV…AGWA), 162–182 (ISYE…TGSL), 203–223 (ILSW…ISGV), 250–270 (GMAF…ISAM), 291–311 (IPGF…FIWL), and 330–350 (IFIP…VSPW).

The protein belongs to the complex I subunit 1 family. NDH-1 is composed of 14 different subunits. Subunits NuoA, H, J, K, L, M, N constitute the membrane sector of the complex.

It localises to the cell inner membrane. It catalyses the reaction a quinone + NADH + 5 H(+)(in) = a quinol + NAD(+) + 4 H(+)(out). NDH-1 shuttles electrons from NADH, via FMN and iron-sulfur (Fe-S) centers, to quinones in the respiratory chain. The immediate electron acceptor for the enzyme in this species is believed to be ubiquinone. Couples the redox reaction to proton translocation (for every two electrons transferred, four hydrogen ions are translocated across the cytoplasmic membrane), and thus conserves the redox energy in a proton gradient. This subunit may bind ubiquinone. This chain is NADH-quinone oxidoreductase subunit H, found in Ralstonia nicotianae (strain ATCC BAA-1114 / GMI1000) (Ralstonia solanacearum).